We begin with the raw amino-acid sequence, 347 residues long: sn-glycerol-3-phosphate import ATP-binding protein UgpC 1 (347 aa).

The 231-residue stretch at 4–234 folds into the ABC transporter domain; the sequence is IELIDLKKNY…PETVFVAGFI (231 aa). 36–43 lines the ATP pocket; the sequence is GPSGCGKS.

It belongs to the ABC transporter superfamily. sn-glycerol-3-phosphate importer (TC 3.A.1.1.3) family. In terms of assembly, the complex is composed of two ATP-binding proteins (UgpC), two transmembrane proteins (UgpA and UgpE) and a solute-binding protein (UgpB).

Its subcellular location is the cell inner membrane. The catalysed reaction is sn-glycerol 3-phosphate(out) + ATP + H2O = sn-glycerol 3-phosphate(in) + ADP + phosphate + H(+). Functionally, part of the ABC transporter complex UgpBAEC involved in sn-glycerol-3-phosphate (G3P) import. Responsible for energy coupling to the transport system. The chain is sn-glycerol-3-phosphate import ATP-binding protein UgpC 1 from Rhizobium etli (strain ATCC 51251 / DSM 11541 / JCM 21823 / NBRC 15573 / CFN 42).